The primary structure comprises 388 residues: Xylose isomerase (388 aa).

Residues H54 and D57 contribute to the active site. E181, E217, H220, D245, D255, D257, and D287 together coordinate Mg(2+).

It belongs to the xylose isomerase family. In terms of assembly, homotetramer. The cofactor is Mg(2+).

It is found in the cytoplasm. It carries out the reaction alpha-D-xylose = alpha-D-xylulofuranose. The sequence is that of Xylose isomerase from Streptomyces avermitilis (strain ATCC 31267 / DSM 46492 / JCM 5070 / NBRC 14893 / NCIMB 12804 / NRRL 8165 / MA-4680).